Here is a 163-residue protein sequence, read N- to C-terminus: MASHQDQSYKAGEPKGHAQEKTGQMADTMKDKAQAAKDKASEMAGSARDRTVESKDQTGSYVSDKAGAVKDKTCETAQAAKEKTGGAMQATKEKASEMGESAKETAVAGKEKTGGLMSSAAEQVKGMAQGATEAVKNTFGMAGADEEEKTTTTRVTRSSARTE.

Disordered stretches follow at residues 1 to 117 (MASH…GGLM) and 139 to 163 (FGMAGADEEEKTTTTRVTRSSARTE). 3 stretches are compositionally biased toward basic and acidic residues: residues 28-56 (TMKDKAQAAKDKASEMAGSARDRTVESKD), 67-84 (GAVKDKTCETAQAAKEKT), and 91-113 (TKEKASEMGESAKETAVAGKEKT). 6 tandem repeats follow at residues 32–42 (KAQAAKDKASE), 43–53 (MAGSARDRTVE), 65–75 (KAGAVKDKTCE), 76–86 (TAQAAKEKTGG), 87–97 (AMQATKEKASE), and 103–115 (KETAVAGKEKTGG). The 6 X 11 AA approximate repeats stretch occupies residues 32–115 (KAQAAKDKAS…AVAGKEKTGG (84 aa)). Residues 152 to 163 (TTRVTRSSARTE) show a composition bias toward low complexity.

It belongs to the LEA type 4 family.

The chain is Late embryogenesis abundant protein Dc3 from Daucus carota (Wild carrot).